The chain runs to 1358 residues: Tenascin-R (1358 aa).

An N-terminal signal peptide occupies residues 1–31 (MGADGETVVLKNMLIGINLILLGSMIKPSEC). Thr-36 and Thr-37 each carry an O-linked (GalNAc...) threonine glycan. Asn-55 is a glycosylation site (N-linked (GlcNAc...) asparagine). Residues 127–157 (CASSAQVLQELLSRIEMLEREVSVLRDQCNA) are a coiled coil. O-linked (Xyl...) (chondroitin sulfate) serine glycosylation occurs at Ser-176. 2 N-linked (GlcNAc...) asparagine glycosylation sites follow: Asn-180 and Asn-198. 3 consecutive EGF-like domains span residues 188-199 (CICNEGWFGKNC), 219-230 (CICDSEYSGDDC), and 250-261 (CVCEEPYTGEDC). The O-linked (Xyl...) (chondroitin sulfate) serine glycan is linked to Ser-271. N-linked (GlcNAc...) asparagine glycosylation is present at Asn-278. Positions 281-292 (CLCEEGYVGEDC) constitute an EGF-like 4 domain. 3 disulfide bridges follow: Cys-292–Cys-301, Cys-297–Cys-312, and Cys-314–Cys-323. O-linked (Xyl...) (chondroitin sulfate) serine glycosylation is present at Ser-302. One can recognise an EGF-like 5 domain in the interval 312–323 (CVCEEGYQGPDC). Fibronectin type-III domains follow at residues 328–420 (PPED…TPQG), 421–505 (LQFK…TVID), 506–595 (GPTQ…TEID), 596–687 (APKN…TELD), 688–777 (SPRD…FRPI), 778–865 (SHLH…TGID), 866–955 (PPKD…AMDN), 956–1042 (PVDL…TLLD), and 1043–1130 (PPAN…TGGR). Residues Asn-392, Asn-470, and Asn-581 are each glycosylated (N-linked (GlcNAc...) asparagine). Position 724 is a phosphoserine (Ser-724). N-linked (GlcNAc...) asparagine glycans are attached at residues Asn-791, Asn-874, Asn-1036, Asn-1046, and Asn-1261. A Fibrinogen C-terminal domain is found at 1129 to 1344 (GRVFPHPQDC…FVEMKMRPYN (216 aa)).

This sequence belongs to the tenascin family. Forms oligomers. Interacts with CNTN1, TNC, and FN1. Interacts with BCAN and ACAN in a calcium-dependent manner. Interacts with SCN2B, PTPRZ1, and CSPG3. In terms of processing, contains N-linked oligosaccharides, O-linked sialylated structures and O-linked chondroitin sulfate glycosaminoglycans. Contains N-linked oligosaccharides with a sulfated carbohydrate structure. O-glycosylated on Thr-36 or Thr-37 with a core 1 or possibly core 8 glycan. As to expression, brain specific.

The protein resides in the secreted. It is found in the extracellular space. Its subcellular location is the extracellular matrix. Functionally, neural extracellular matrix (ECM) protein involved in interactions with different cells and matrix components. These interactions can influence cellular behavior by either evoking a stable adhesion and differentiation, or repulsion and inhibition of neurite growth. Binding to cell surface gangliosides inhibits RGD-dependent integrin-mediated cell adhesion and results in an inhibition of PTK2/FAK1 (FAK) phosphorylation and cell detachment. Binding to membrane surface sulfatides results in a oligodendrocyte adhesion and differentiation. Interaction with CNTN1 induces a repulsion of neurons and an inhibition of neurite outgrowth. Interacts with SCN2B may play a crucial role in clustering and regulation of activity of sodium channels at nodes of Ranvier. TNR-linked chondroitin sulfate glycosaminoglycans are involved in the interaction with FN1 and mediate inhibition of cell adhesion and neurite outgrowth. The highly regulated addition of sulfated carbohydrate structure may modulate the adhesive properties of TNR over the course of development and during synapse maintenance. The chain is Tenascin-R (TNR) from Homo sapiens (Human).